The primary structure comprises 345 residues: Histidinol-phosphate aminotransferase (345 aa).

Residue Lys206 is modified to N6-(pyridoxal phosphate)lysine.

It belongs to the class-II pyridoxal-phosphate-dependent aminotransferase family. Histidinol-phosphate aminotransferase subfamily. As to quaternary structure, homodimer. It depends on pyridoxal 5'-phosphate as a cofactor.

The catalysed reaction is L-histidinol phosphate + 2-oxoglutarate = 3-(imidazol-4-yl)-2-oxopropyl phosphate + L-glutamate. Its pathway is amino-acid biosynthesis; L-histidine biosynthesis; L-histidine from 5-phospho-alpha-D-ribose 1-diphosphate: step 7/9. The polypeptide is Histidinol-phosphate aminotransferase (Bacteroides fragilis (strain YCH46)).